The following is a 332-amino-acid chain: Ketol-acid reductoisomerase (NADP(+)) (332 aa).

Residues 2 to 182 form the KARI N-terminal Rossmann domain; sequence AKIYTDKDVS…GATRAGVIET (181 aa). NADP(+) contacts are provided by residues 25 to 28, Ser-53, and 83 to 86; these read YGSQ and DMIQ. His-108 is a catalytic residue. Gly-134 is a binding site for NADP(+). Residues 183–328 enclose the KARI C-terminal knotted domain; sequence TFKEETETDL…RSLRDIILRG (146 aa). Residues Asp-191, Glu-195, Glu-227, and Glu-231 each contribute to the Mg(2+) site. Ser-252 is a binding site for substrate.

It belongs to the ketol-acid reductoisomerase family. Mg(2+) serves as cofactor.

It carries out the reaction (2R)-2,3-dihydroxy-3-methylbutanoate + NADP(+) = (2S)-2-acetolactate + NADPH + H(+). The enzyme catalyses (2R,3R)-2,3-dihydroxy-3-methylpentanoate + NADP(+) = (S)-2-ethyl-2-hydroxy-3-oxobutanoate + NADPH + H(+). It participates in amino-acid biosynthesis; L-isoleucine biosynthesis; L-isoleucine from 2-oxobutanoate: step 2/4. It functions in the pathway amino-acid biosynthesis; L-valine biosynthesis; L-valine from pyruvate: step 2/4. In terms of biological role, involved in the biosynthesis of branched-chain amino acids (BCAA). Catalyzes an alkyl-migration followed by a ketol-acid reduction of (S)-2-acetolactate (S2AL) to yield (R)-2,3-dihydroxy-isovalerate. In the isomerase reaction, S2AL is rearranged via a Mg-dependent methyl migration to produce 3-hydroxy-3-methyl-2-ketobutyrate (HMKB). In the reductase reaction, this 2-ketoacid undergoes a metal-dependent reduction by NADPH to yield (R)-2,3-dihydroxy-isovalerate. The polypeptide is Ketol-acid reductoisomerase (NADP(+)) (Sulfolobus acidocaldarius (strain ATCC 33909 / DSM 639 / JCM 8929 / NBRC 15157 / NCIMB 11770)).